A 158-amino-acid polypeptide reads, in one-letter code: Phosphopantetheine adenylyltransferase (158 aa).

Position 10 (Ser-10) interacts with substrate. ATP-binding positions include 10 to 11 (SF) and His-18. 3 residues coordinate substrate: Lys-42, Leu-74, and Arg-88. ATP-binding positions include 89-91 (GLR), Glu-99, and 124-130 (YANISSS).

The protein belongs to the bacterial CoaD family. In terms of assembly, homohexamer. Mg(2+) is required as a cofactor.

It localises to the cytoplasm. It catalyses the reaction (R)-4'-phosphopantetheine + ATP + H(+) = 3'-dephospho-CoA + diphosphate. It participates in cofactor biosynthesis; coenzyme A biosynthesis; CoA from (R)-pantothenate: step 4/5. In terms of biological role, reversibly transfers an adenylyl group from ATP to 4'-phosphopantetheine, yielding dephospho-CoA (dPCoA) and pyrophosphate. The protein is Phosphopantetheine adenylyltransferase of Vesicomyosocius okutanii subsp. Calyptogena okutanii (strain HA).